Here is a 278-residue protein sequence, read N- to C-terminus: Large ribosomal subunit protein uL2 (278 aa).

Disordered stretches follow at residues leucine 33 to glycine 57 and valine 224 to arginine 278. Positions alanine 45–glycine 57 are enriched in basic residues. The span at proline 253–isoleucine 268 shows a compositional bias: basic and acidic residues. The span at valine 269–arginine 278 shows a compositional bias: basic residues.

The protein belongs to the universal ribosomal protein uL2 family. In terms of assembly, part of the 50S ribosomal subunit. Forms a bridge to the 30S subunit in the 70S ribosome.

Its function is as follows. One of the primary rRNA binding proteins. Required for association of the 30S and 50S subunits to form the 70S ribosome, for tRNA binding and peptide bond formation. It has been suggested to have peptidyltransferase activity; this is somewhat controversial. Makes several contacts with the 16S rRNA in the 70S ribosome. The sequence is that of Large ribosomal subunit protein uL2 from Mycobacteroides abscessus (strain ATCC 19977 / DSM 44196 / CCUG 20993 / CIP 104536 / JCM 13569 / NCTC 13031 / TMC 1543 / L948) (Mycobacterium abscessus).